The following is a 287-amino-acid chain: Cyclopropane mycolic acid synthase MmaA2 (287 aa).

S-adenosyl-L-methionine-binding positions include 33–34 (YS), 72–74 (GCG), 94–99 (TLSKNQ), 123–124 (WE), and I136. Residue C269 is part of the active site.

The protein belongs to the CFA/CMAS family.

It catalyses the reaction a 1-acyl-2-(9Z)-enoyl-sn-glycero-3-phospholipid + S-adenosyl-L-methionine = a 1-acyl-2-(9-cyclopronane)-acyl-sn-glycero-3-phospholipid + S-adenosyl-L-homocysteine + H(+). Its pathway is lipid metabolism; mycolic acid biosynthesis. In terms of biological role, catalyzes the conversion of a double bond to a cis cyclopropane ring at the distal position of an alpha mycolic acid via the transfer of a methylene group from S-adenosyl-L-methionine. MmaA2 also catalyzes the biosynthesis of the cis-cyclopropanated methoxymycolates. Cyclopropanated mycolic acids are key factors participating in cell envelope permeability, host immunomodulation and persistence. This Mycobacterium tuberculosis (strain ATCC 25177 / H37Ra) protein is Cyclopropane mycolic acid synthase MmaA2 (mmaA2).